Consider the following 988-residue polypeptide: MPGGKRGLVAPQNTFLENIVRRSSESSFLLGNAQIVDWPVVYSNDGFCKLSGYHRADVMQKSSTCSFMYGELTDKKTIEKVRQTFDNYESNCFEVLLYKKNRTPVWFYMQIAPIRNEHEKVVLFLCTFKDITLFKQPIEDDSTKGWTKFARLTRALTNSRSVLQQLTPMNKTETVHKHSRLAEVLQLGSDILPQYKQEAPKTPPHIILHYCAFKTTWDWVILILTFYTAIMVPYNVSFKTKQNNIAWLVLDSVVDVIFLVDIVLNFHTTFVGPGGEVISDPKLIRMNYLKTWFVIDLLSCLPYDIINAFENVDEGISSLFSSLKVVRLLRLGRVARKLDHYLEYGAAVLVLLVCVFGLVAHWLACIWYSIGDYEVIDEVTNTIQIDSWLYQLALSIGTPYRYNTSAGIWEGGPSKDSLYVSSLYFTMTSLTTIGFGNIAPTTDVEKMFSVAMMMVGSLLYATIFGNVTTIFQQMYANTNRYHEMLNNVRDFLKLYQVPKGLSERVMDYIVSTWSMSKGIDTEKVLSICPKDMRADICVHLNRKVFNEHPAFRLASDGCLRALAVEFQTIHCAPGDLIYHAGESVDALCFVVSGSLEVIQDEEVVAILGKGDVFGDIFWKETTLAHACANVRALTYCDLHIIKREALLKVLDFYTAFANSFSRNLTLTCNLRKRIIFRKISDVKKEEEERLRQKNEVTLSIPVDHPVRKLFQKFKQQKELRNQGSAQSDPERSQLQVESRPLQNGASITGTSVVTVSQITPIQTSLAYVKTSETLKQNNRDAMELKPNGGAEPKCLKVNSPIRMKNGNGKGWLRLKNNMGAHEEKKEEWNNVTKAESMGLLSEDPKGSDSENSVTKNPLRKTDSCDSGITKSDLRLDKAGEARSPLEHSPSQADAKHPFYPIPEQALQTTLQEVKHELKEDIQLLSCRMTALEKQVAEILKLLSEKSVPQTSSPKPQIPLQVPPQIPCQDIFSVSRPESPESDKDEINF.

The Cytoplasmic segment spans residues 1–217 (MPGGKRGLVA…LHYCAFKTTW (217 aa)). The region spanning 14–86 (TFLENIVRRS…TIEKVRQTFD (73 aa)) is the PAS domain. Residues 91-143 (NCFEVLLYKKNRTPVWFYMQIAPIRNEHEKVVLFLCTFKDITLFKQPIEDDST) enclose the PAC domain. The helical transmembrane segment at 218–238 (DWVILILTFYTAIMVPYNVSF) threads the bilayer. The Extracellular portion of the chain corresponds to 239–243 (KTKQN). Residues 244–264 (NIAWLVLDSVVDVIFLVDIVL) form a helical membrane-spanning segment. The Cytoplasmic segment spans residues 265-291 (NFHTTFVGPGGEVISDPKLIRMNYLKT). A helical transmembrane segment spans residues 292 to 312 (WFVIDLLSCLPYDIINAFENV). Residues 313–319 (DEGISSL) lie on the Extracellular side of the membrane. A helical; Voltage-sensor membrane pass occupies residues 320–340 (FSSLKVVRLLRLGRVARKLDH). The Cytoplasmic portion of the chain corresponds to 341–346 (YLEYGA). The helical transmembrane segment at 347–367 (AVLVLLVCVFGLVAHWLACIW) threads the bilayer. Topologically, residues 368–419 (YSIGDYEVIDEVTNTIQIDSWLYQLALSIGTPYRYNTSAGIWEGGPSKDSLY) are extracellular. The N-linked (GlcNAc...) asparagine glycan is linked to asparagine 403. An intramembrane region (pore-forming) is located at residues 420 to 440 (VSSLYFTMTSLTTIGFGNIAP). The Selectivity filter signature appears at 432-437 (TIGFGN). Over 441 to 446 (TTDVEK) the chain is Extracellular. A helical transmembrane segment spans residues 447–467 (MFSVAMMMVGSLLYATIFGNV). Topologically, residues 468-988 (TTIFQQMYAN…PESDKDEINF (521 aa)) are cytoplasmic. 550-667 (AFRLASDGCL…NSFSRNLTLT (118 aa)) lines the a nucleoside 3',5'-cyclic phosphate pocket. The segment at 704-715 (HPVRKLFQKFKQ) is calmodulin-binding. The disordered stretch occupies residues 718–742 (ELRNQGSAQSDPERSQLQVESRPLQ). Positions 721-742 (NQGSAQSDPERSQLQVESRPLQ) are enriched in polar residues. Lysine 785 participates in a covalent cross-link: Glycyl lysine isopeptide (Lys-Gly) (interchain with G-Cter in ubiquitin). Disordered stretches follow at residues 839–897 (LLSE…AKHP) and 946–965 (SVPQ…PPQI). Residues 871 to 885 (SDLRLDKAGEARSPL) show a composition bias toward basic and acidic residues. Position 883 is a phosphoserine (serine 883). Residues 909 to 948 (TLQEVKHELKEDIQLLSCRMTALEKQVAEILKLLSEKSVP) form a CAD (involved in subunit assembly) region.

It belongs to the potassium channel family. H (Eag) (TC 1.A.1.20) subfamily. Kv10.2/KCNH5 sub-subfamily. Homotetramer. The potassium channel is probably composed of a homo- or heterotetrameric complex of pore-forming alpha subunits that can associate with modulating beta subunits. Heteromultimer with KCNH1/EAG. In terms of tissue distribution, detected in adult testis and in embryonic and adult brain, but not in other tissues. Highly expressed in specific brain areas, such as neocortex, olfactory bulb, primary olfactory cortex and brain stem. In cortex, expression is concentrated in a narrow band toward the middle lamella (layer IV). Moderately expressed in spinal cord, dorsal thalamic nuclei, medial hypothalamus, colliculus, lateral lemniscus, pontine nuclei and Islands of Calleja.

The protein resides in the membrane. The enzyme catalyses K(+)(in) = K(+)(out). Inhibited by low nanomolar concentrations of cytosolic calcium. Functionally, pore-forming (alpha) subunit of a voltage-gated delayed rectifier potassium channel that mediates outward-rectifying potassium currents which, on depolarization, reaches a steady-state level and do not inactivate. The kinetic is characterized by a slow activation time course and a small voltage dependence of the activation time constants, therefore, starts to open at more negative voltages. The activation kinetics depend on the prepulse potential and external divalent cation concentration. The time course of activation is biphasic with a fast and a slowly activating current component. With negative prepulses, the current activation is delayed and slowed down several fold, whereas more positive prepulses speed up activation, therefore the activation rate depends on holding potential. The polypeptide is Voltage-gated delayed rectifier potassium channel KCNH5 (Rattus norvegicus (Rat)).